Here is a 356-residue protein sequence, read N- to C-terminus: S-adenosylmethionine:tRNA ribosyltransferase-isomerase (356 aa).

Belongs to the QueA family. In terms of assembly, monomer.

The protein resides in the cytoplasm. The enzyme catalyses 7-aminomethyl-7-carbaguanosine(34) in tRNA + S-adenosyl-L-methionine = epoxyqueuosine(34) in tRNA + adenine + L-methionine + 2 H(+). The protein operates within tRNA modification; tRNA-queuosine biosynthesis. In terms of biological role, transfers and isomerizes the ribose moiety from AdoMet to the 7-aminomethyl group of 7-deazaguanine (preQ1-tRNA) to give epoxyqueuosine (oQ-tRNA). This Ralstonia nicotianae (strain ATCC BAA-1114 / GMI1000) (Ralstonia solanacearum) protein is S-adenosylmethionine:tRNA ribosyltransferase-isomerase.